We begin with the raw amino-acid sequence, 248 residues long: Neurotrophic factor BDNF precursor form (248 aa).

The first 18 residues, 1-18 (MTILFLTMVISYFSCMKA), serve as a signal peptide directing secretion. Residues 19-129 (APMKEANVRG…AANMSMRVRR (111 aa)) constitute a propeptide that is removed on maturation. An N-linked (GlcNAc...) asparagine glycan is attached at N122. Cystine bridges form between C142-C209, C187-C238, and C197-C240.

Belongs to the NGF-beta family. In terms of assembly, monomers and homodimers. Binds to NTRK2/TRKB. Can form heterodimers with other neurotrophin family members, such as NTF3 and NTF4 (in vitro), but the physiological relevance of this is not clear. BDNF precursor form: interacts with the heterodimer formed by NGFR and SORCS2. Mature BDNF has much lower affinity for the heterodimer formed by NGFR and SORCS2. Post-translationally, N-glycosylated and glycosulfated, contrary to mature BDNF. Mature BDNF is produced by proteolytic removal of the propeptide, catalyzed by a FURIN family member. In addition, the precursor form is proteolytically cleaved within the propeptide, but this is not an obligatory intermediate for the production of mature BDNF. Can be converted into mature BDNF by plasmin (PLG).

It localises to the secreted. Important signaling molecule that activates signaling cascades downstream of NTRK2. During development, promotes the survival and differentiation of selected neuronal populations of the peripheral and central nervous systems. Participates in axonal growth, pathfinding and in the modulation of dendritic growth and morphology. Major regulator of synaptic transmission and plasticity at adult synapses in many regions of the CNS. The versatility of BDNF is emphasized by its contribution to a range of adaptive neuronal responses including long-term potentiation (LTP), long-term depression (LTD), certain forms of short-term synaptic plasticity, as well as homeostatic regulation of intrinsic neuronal excitability. In terms of biological role, important signaling molecule that activates signaling cascades downstream of NTRK2. Activates signaling cascades via the heterodimeric receptor formed by NGFR and SORCS2. Signaling via NGFR and SORCS2 plays a role in synaptic plasticity and long-term depression (LTD). Binding to NGFR and SORCS2 promotes neuronal apoptosis. Promotes neuronal growth cone collapse. The sequence is that of Neurotrophic factor BDNF precursor form (BDNF) from Lipotes vexillifer (Yangtze river dolphin).